We begin with the raw amino-acid sequence, 181 residues long: Cytochrome P450 monooxygenase dtpC (181 aa).

Cys-125 contributes to the heme binding site.

It belongs to the cytochrome P450 family. The cofactor is heme.

It participates in alkaloid biosynthesis. Its pathway is secondary metabolite biosynthesis. Its function is as follows. Cytochrome P450 monooxygenase; part of the gene cluster that mediates the biosynthesis of the dimeric diketopiperazine alkaloid ditryptophenaline. The nonribosomal peptide synthase dtpA accepts L-tryptophan and L-phenylalanine as its substrates and forms the phenylalanyl-tryptophanyl cyclic dipeptide product cyclophenylalanyltryptophenyl. The N-methyltransferase dtpB is responsible for the N-methylation of cyclophenylalanyltryptophenyl to yield cyclo-N-methylphenylalanyltryptophenyl. The cytochrome P450 monooxygenase is responsible not only for pyrroloindole ring formation but also for concurrent dimerization of N-methylphenylalanyltryptophanyl diketopiperazine monomers into a homodimeric product. The polypeptide is Cytochrome P450 monooxygenase dtpC (Aspergillus flavus (strain ATCC 200026 / FGSC A1120 / IAM 13836 / NRRL 3357 / JCM 12722 / SRRC 167)).